A 404-amino-acid polypeptide reads, in one-letter code: S-adenosylmethionine synthase (404 aa).

His-18 is an ATP binding site. Position 20 (Asp-20) interacts with Mg(2+). Position 46 (Glu-46) interacts with K(+). Glu-59 and Gln-102 together coordinate L-methionine. The interval 102-112 (QSPEIAQGVDH) is flexible loop. Residues 178 to 180 (DGK), 249 to 250 (KF), Asp-258, 264 to 265 (RK), Ala-281, and Lys-285 contribute to the ATP site. Position 258 (Asp-258) interacts with L-methionine. Lys-289 provides a ligand contact to L-methionine.

Belongs to the AdoMet synthase family. In terms of assembly, homotetramer; dimer of dimers. Requires Mg(2+) as cofactor. The cofactor is K(+).

The protein localises to the cytoplasm. The enzyme catalyses L-methionine + ATP + H2O = S-adenosyl-L-methionine + phosphate + diphosphate. The protein operates within amino-acid biosynthesis; S-adenosyl-L-methionine biosynthesis; S-adenosyl-L-methionine from L-methionine: step 1/1. Catalyzes the formation of S-adenosylmethionine (AdoMet) from methionine and ATP. The overall synthetic reaction is composed of two sequential steps, AdoMet formation and the subsequent tripolyphosphate hydrolysis which occurs prior to release of AdoMet from the enzyme. This chain is S-adenosylmethionine synthase, found in Rhodococcus jostii (strain RHA1).